The primary structure comprises 196 residues: HTH-type transcriptional regulator UidR (196 aa).

The region spanning 10–70 is the HTH tetR-type domain; it reads QPTRTRILNA…AIILQDQERA (61 aa). Positions 33 to 52 form a DNA-binding region, H-T-H motif; sequence SMKAICKSCAISPGTLYHHF.

Its function is as follows. Repressor for the uidRABC (gusRABC) operon. This is HTH-type transcriptional regulator UidR (uidR) from Escherichia coli O157:H7.